The primary structure comprises 669 residues: DNA ligase (669 aa).

Residues 32–36 (DAEYD), 81–82 (SL), and E113 contribute to the NAD(+) site. The N6-AMP-lysine intermediate role is filled by K115. NAD(+) contacts are provided by R136, E173, K290, and K314. Zn(2+) is bound by residues C408, C411, C426, and C432. Positions 592-669 (AVDSALAGKI…DEQALIEFLK (78 aa)) constitute a BRCT domain.

It belongs to the NAD-dependent DNA ligase family. LigA subfamily. Mg(2+) serves as cofactor. Mn(2+) is required as a cofactor.

The catalysed reaction is NAD(+) + (deoxyribonucleotide)n-3'-hydroxyl + 5'-phospho-(deoxyribonucleotide)m = (deoxyribonucleotide)n+m + AMP + beta-nicotinamide D-nucleotide.. Functionally, DNA ligase that catalyzes the formation of phosphodiester linkages between 5'-phosphoryl and 3'-hydroxyl groups in double-stranded DNA using NAD as a coenzyme and as the energy source for the reaction. It is essential for DNA replication and repair of damaged DNA. The sequence is that of DNA ligase from Vibrio cholerae serotype O1 (strain ATCC 39315 / El Tor Inaba N16961).